Reading from the N-terminus, the 258-residue chain is Ribosomal RNA small subunit methyltransferase A (258 aa).

His9, Leu11, Gly36, Glu57, Asp83, and Asn102 together coordinate S-adenosyl-L-methionine.

Belongs to the class I-like SAM-binding methyltransferase superfamily. rRNA adenine N(6)-methyltransferase family. RsmA subfamily.

The protein localises to the cytoplasm. The enzyme catalyses adenosine(1518)/adenosine(1519) in 16S rRNA + 4 S-adenosyl-L-methionine = N(6)-dimethyladenosine(1518)/N(6)-dimethyladenosine(1519) in 16S rRNA + 4 S-adenosyl-L-homocysteine + 4 H(+). In terms of biological role, specifically dimethylates two adjacent adenosines (A1518 and A1519) in the loop of a conserved hairpin near the 3'-end of 16S rRNA in the 30S particle. May play a critical role in biogenesis of 30S subunits. The polypeptide is Ribosomal RNA small subunit methyltransferase A (Caulobacter vibrioides (strain ATCC 19089 / CIP 103742 / CB 15) (Caulobacter crescentus)).